The sequence spans 167 residues: Transcription antitermination protein NusB (167 aa).

Belongs to the NusB family.

Involved in transcription antitermination. Required for transcription of ribosomal RNA (rRNA) genes. Binds specifically to the boxA antiterminator sequence of the ribosomal RNA (rrn) operons. The protein is Transcription antitermination protein NusB of Nitrosomonas europaea (strain ATCC 19718 / CIP 103999 / KCTC 2705 / NBRC 14298).